The chain runs to 722 residues: Probable carboxypeptidase X1 (722 aa).

An N-terminal signal peptide occupies residues 1–20; the sequence is MWGLLLAVTAFAPSVGLGLG. Residues 30-54 are disordered; it reads APGSTLAPHSSVAQPSTKANETSER. Positions 36–49 are enriched in polar residues; it reads APHSSVAQPSTKAN. N-linked (GlcNAc...) asparagine glycosylation is found at Asn-49, Asn-200, Asn-210, and Asn-307. One can recognise an F5/8 type C domain in the interval 103-263; that stretch reads PGCPPLGLES…PCLRAEILAC (161 aa). Cysteines 105 and 263 form a disulfide. The region spanning 287-610 is the Peptidase M14 domain; the sequence is RHHNYKAMRK…DALLTYLEQV (324 aa). Zn(2+)-binding residues include His-349 and Glu-352. A glycan (N-linked (GlcNAc...) asparagine) is linked at Asn-461. His-487 provides a ligand contact to Zn(2+). Glu-580 serves as the catalytic Proton donor/acceptor.

This sequence belongs to the peptidase M14 family. It depends on Zn(2+) as a cofactor. As to expression, strongly expressed in testis and spleen. Moderately expressed in salivary gland, brain, heart, lung, and kidney. Extremely low expression in liver and muscle. No expression in eye, adrenal, and white adipose tissues.

It localises to the secreted. Its function is as follows. May be involved in cell-cell interactions. No carboxypeptidase activity was found yet. The polypeptide is Probable carboxypeptidase X1 (Cpxm1) (Mus musculus (Mouse)).